A 526-amino-acid chain; its full sequence is Estrogen receptor beta (526 aa).

Residues 1 to 145 (MDIKNSPSNL…SPSSKRDAHF (145 aa)) are modulating. A phosphoserine; by MAPK mark is found at serine 84 and serine 102. 2 NR C4-type zinc fingers span residues 146–166 (CAVCSDYASGYHYGVWSCEGC) and 182–206 (CPATNQCTIDKNRRKSCQACRLRKC). Residues 146-211 (CAVCSDYASG…RLRKCYEVGM (66 aa)) constitute a DNA-binding region (nuclear receptor). An NR LBD domain is found at 261–494 (SPEQLVLTLL…DLLLEMLNAH (234 aa)). The tract at residues 502-526 (LVTGSERSRMEESESKEGSQKPQAQ) is disordered. Basic and acidic residues predominate over residues 507-520 (ERSRMEESESKEGS).

This sequence belongs to the nuclear hormone receptor family. NR3 subfamily. Binds DNA as a homodimer. Can form a heterodimer with ESR1. Interacts with NCOA1, NCOA3, NCOA5 and NCOA6 coactivators, leading to a strong increase of transcription of target genes. Interacts with UBE1C and AKAP13. Interacts with DNTTIP2. Interacts with CCDC62 in the presence of estradiol/E2; this interaction seems to enhance the transcription of target genes. Interacts with DNAAF4. Interacts with PRMT2. Interacts with CCAR2 (via N-terminus) in a ligand-independent manner. Interacts with RBM39, in the presence of estradiol (E2). Interacts with STUB1/CHIP. In terms of processing, phosphorylation at Ser-84 and Ser-102 recruits NCOA1.

It localises to the nucleus. In terms of biological role, nuclear hormone receptor. Binds estrogens with an affinity similar to that of ESR1/ER-alpha, and activates expression of reporter genes containing estrogen response elements (ERE) in an estrogen-dependent manner. The sequence is that of Estrogen receptor beta (ESR2) from Sus scrofa (Pig).